A 125-amino-acid chain; its full sequence is Cardioactive peptide (125 aa).

The N-terminal stretch at 1–22 (MTVSRVCLLLLVALVYLDCCYA) is a signal peptide. A propeptide spanning residues 23-42 (ASIPRNFDPRLSEEIVMAPK) is cleaved from the precursor. Residues C47 and C53 are joined by a disulfide bond. C53 carries the cysteine amide modification. Positions 57–125 (RSQGPPGMPA…RRKQKEAYIQ (69 aa)) are excised as a propeptide.

In terms of tissue distribution, abdominal perivisceral organ; major neurohemal release site. Expressed in 116 neurons in post-embryonic central nervous system. Nine pairs of cells are observed in the brain, 4.5 pairs in the subesophageal ganglion, three pairs in each thoracic ganglion (T1-T3), three pairs in the first abdominal ganglion (A1), five pairs each in the second to sixth abdominal ganglia (A2-A6) and 7.5 pairs in the terminal ganglion. Expressed in every ganglion in each post-embryonic stage, except in the thoracic ganglia of first- and second-instar larvae. Colocalizes with CAP2b in median neurosecretory cells during the last larval instar through to adults.

The protein resides in the secreted. Cardioregulatory neurohormone that increases heart beat rate during adult wing inflation; has no effect on beat amplitude. The effect of CCAP is both ino- and chronotropic. The polypeptide is Cardioactive peptide (Manduca sexta (Tobacco hawkmoth)).